Reading from the N-terminus, the 1939-residue chain is Myosin-6 (1939 aa).

Residues Asp-32–Pro-81 form the Myosin N-terminal SH3-like domain. The Myosin motor domain occupies Asp-85–Asp-780. Residue Lys-129 is modified to N6,N6,N6-trimethyllysine. Position 178 to 185 (Gly-178 to Thr-185) interacts with ATP. Thr-379 is subject to Phosphothreonine. At Ser-417 the chain carries Phosphoserine. Actin-binding stretches follow at residues Leu-657–Glu-679 and Lys-759–Gly-773. The region spanning Leu-783–Ala-812 is the IQ domain. Positions Leu-842–Glu-1939 form a coiled coil. Phosphoserine is present on residues Ser-1090 and Ser-1139. At Tyr-1261 the chain carries Phosphotyrosine. Ser-1271 carries the post-translational modification Phosphoserine. 2 positions are modified to phosphothreonine: Thr-1277 and Thr-1284. Ser-1309 carries the post-translational modification Phosphoserine. Tyr-1310 carries the post-translational modification Phosphotyrosine. Phosphothreonine is present on Thr-1311. At Ser-1512 the chain carries Phosphoserine. 2 positions are modified to phosphothreonine: Thr-1515 and Thr-1681. The tract at residues Ala-1908–Glu-1939 is disordered. Over residues Lys-1925–Glu-1939 the composition is skewed to basic and acidic residues.

The protein belongs to the TRAFAC class myosin-kinesin ATPase superfamily. Myosin family. As to quaternary structure, muscle myosin is a hexameric protein that consists of 2 heavy chain subunits (MHC), 2 alkali light chain subunits (MLC) and 2 regulatory light chain subunits (MLC-2).

The protein resides in the cytoplasm. The protein localises to the myofibril. Functionally, muscle contraction. The protein is Myosin-6 (MYH6) of Mesocricetus auratus (Golden hamster).